Consider the following 358-residue polypeptide: Reverse gyrase subunit A (358 aa).

A Topo IA-type catalytic domain is found at 1–351 (MNATLRIRNR…KLYLELERVV (351 aa)). The O-(5'-phospho-DNA)-tyrosine intermediate role is filled by Tyr78.

The protein belongs to the type IA topoisomerase family. As to quaternary structure, heterodimer of an RgyrA and RgyrB subunit. The topoisomerase domain is shared between the two subunits. The cofactor is Mg(2+).

It is found in the cytoplasm. Functionally, modifies the topological state of DNA by introducing positive supercoils in an ATP-dependent process; dATP also allows positive supercoiling. Increases the linking number in steps of +1. Only this subunit binds DNA, in isolation it does not hydrolyze ATP. Hydrolyzes ATP only in the presence of DNA. Transiently cleaves a single DNA strand and remains covalently bound to the 5' DNA end probably through a tyrosine residue. It changes linking number in steps of one, and nicks DNA preferentially at 5'-CNNN | 3'-sites with a strong preference for 4 pyrimidine residues. There are about 1000 heterodimers per cell. May be involved in rewinding the DNA strands in the regions of the chromosome that have opened up to allow transcription or replication. In terms of biological role, reverse gyrase activity is reconstituted after incubation at 80 degrees Celsius for 5 minutes, positive supercoiling requires ATP and Mg(2+). In the presence of ATP it binds and nicks substrate but does not make closed product. The sequence is that of Reverse gyrase subunit A from Methanopyrus kandleri (strain AV19 / DSM 6324 / JCM 9639 / NBRC 100938).